A 188-amino-acid polypeptide reads, in one-letter code: MATVGMNDVKNGMKILVNNEPAVITETEYVKPGKGQAFTRMKYRFIKSGRVVEMTMKATDDVEVADVVDTDMRYLYSDGEYWHFMDPETFEQVQTDKAGMGGADKWLKGEEDCIVTLWNGAPIWVQPPNFVELKITETDPGVRGDTSGGGGKPATLETGAVVRVPLFVNQDEIIKVDTRSGEYSARVK.

Lys34 is subject to N6-(3,6-diaminohexanoyl)-5-hydroxylysine.

Belongs to the elongation factor P family. Post-translationally, may be beta-lysylated on the epsilon-amino group of Lys-34 by the combined action of EpmA and EpmB, and then hydroxylated on the C5 position of the same residue by EpmC (if this protein is present). Lysylation is critical for the stimulatory effect of EF-P on peptide-bond formation. The lysylation moiety may extend toward the peptidyltransferase center and stabilize the terminal 3-CCA end of the tRNA. Hydroxylation of the C5 position on Lys-34 may allow additional potential stabilizing hydrogen-bond interactions with the P-tRNA.

The protein localises to the cytoplasm. It participates in protein biosynthesis; polypeptide chain elongation. Functionally, involved in peptide bond synthesis. Alleviates ribosome stalling that occurs when 3 or more consecutive Pro residues or the sequence PPG is present in a protein, possibly by augmenting the peptidyl transferase activity of the ribosome. Modification of Lys-34 is required for alleviation. This is Elongation factor P from Xanthomonas oryzae pv. oryzae (strain MAFF 311018).